The sequence spans 203 residues: Proteasome subunit beta 2 (203 aa).

Positions 1-9 (MGEEVQIGA) are cleaved as a propeptide — removed in mature form; by autocatalysis. Residue T10 is the Nucleophile of the active site.

The protein belongs to the peptidase T1B family. As to quaternary structure, the 20S proteasome core is composed of 14 alpha and 14 beta subunits that assemble into four stacked heptameric rings, resulting in a barrel-shaped structure. The two inner rings, each composed of seven catalytic beta subunits, are sandwiched by two outer rings, each composed of seven alpha subunits. The catalytic chamber with the active sites is on the inside of the barrel. Has a gated structure, the ends of the cylinder being occluded by the N-termini of the alpha-subunits. Is capped at one or both ends by the proteasome regulatory ATPase, PAN.

The protein resides in the cytoplasm. It carries out the reaction Cleavage of peptide bonds with very broad specificity.. Its activity is regulated as follows. The formation of the proteasomal ATPase PAN-20S proteasome complex, via the docking of the C-termini of PAN into the intersubunit pockets in the alpha-rings, triggers opening of the gate for substrate entry. Interconversion between the open-gate and close-gate conformations leads to a dynamic regulation of the 20S proteasome proteolysis activity. Its function is as follows. Component of the proteasome core, a large protease complex with broad specificity involved in protein degradation. The polypeptide is Proteasome subunit beta 2 (Pyrobaculum arsenaticum (strain DSM 13514 / JCM 11321 / PZ6)).